We begin with the raw amino-acid sequence, 227 residues long: MTDSNRDGAAAHSLHAGVYPGNLFMVVAPSGAGKSTLVNALLSKDPEIRLSISYTTRKPRPGEQDGQHYHFTTVEDFRERHARHEFLESAEVHGNYYGTSRVWIEEQMKIGHDVLLEIDWQGAQQVKKQFRNAVGIFILPPSLAALEERLKKRGQDEPNVITRRLLAAGSEIAHAAEAQYVVINETFEHALAELECIVAATRLRFTSQYARHAELFVELGIHLPHAE.

Residues 21 to 199 (GNLFMVVAPS…ALAELECIVA (179 aa)) enclose the Guanylate kinase-like domain. 28-35 (APSGAGKS) is a binding site for ATP.

This sequence belongs to the guanylate kinase family.

The protein resides in the cytoplasm. The catalysed reaction is GMP + ATP = GDP + ADP. Its function is as follows. Essential for recycling GMP and indirectly, cGMP. In Burkholderia mallei (strain ATCC 23344), this protein is Guanylate kinase.